Consider the following 122-residue polypeptide: uncharacterized protein (122 aa).

Disordered stretches follow at residues 1–30 and 96–122; these read MGRE…DQPE and FKSC…DAMG.

This is an uncharacterized protein from Homo sapiens (Human).